Consider the following 130-residue polypeptide: Small ribosomal subunit protein uS8 (130 aa).

This sequence belongs to the universal ribosomal protein uS8 family. In terms of assembly, part of the 30S ribosomal subunit. Contacts proteins S5 and S12.

Its function is as follows. One of the primary rRNA binding proteins, it binds directly to 16S rRNA central domain where it helps coordinate assembly of the platform of the 30S subunit. The chain is Small ribosomal subunit protein uS8 from Mannheimia succiniciproducens (strain KCTC 0769BP / MBEL55E).